We begin with the raw amino-acid sequence, 228 residues long: Cytochrome c oxidase subunit 2 (228 aa).

Residues 1 to 26 (MSTWANLGLQDSASPLMEQLIFFHDH) are Mitochondrial intermembrane-facing. Residues 27-48 (ALLILVMITVLVGYLMFMLFFN) form a helical membrane-spanning segment. Residues 49-62 (NYVNRFLLHGQLIE) lie on the Mitochondrial matrix side of the membrane. The helical transmembrane segment at 63–82 (MIWTILPAIILLFIALPSLR) threads the bilayer. The Mitochondrial intermembrane segment spans residues 83-228 (LLYLLDEINE…FIKWISSNNS (146 aa)). Residues H161, C196, E198, C200, H204, and M207 each contribute to the Cu cation site. E198 provides a ligand contact to Mg(2+).

It belongs to the cytochrome c oxidase subunit 2 family. As to quaternary structure, component of the cytochrome c oxidase (complex IV, CIV), a multisubunit enzyme composed of a catalytic core of 3 subunits and several supernumerary subunits. The complex exists as a monomer or a dimer and forms supercomplexes (SCs) in the inner mitochondrial membrane with ubiquinol-cytochrome c oxidoreductase (cytochrome b-c1 complex, complex III, CIII). Requires Cu cation as cofactor.

The protein resides in the mitochondrion inner membrane. The enzyme catalyses 4 Fe(II)-[cytochrome c] + O2 + 8 H(+)(in) = 4 Fe(III)-[cytochrome c] + 2 H2O + 4 H(+)(out). Its function is as follows. Component of the cytochrome c oxidase, the last enzyme in the mitochondrial electron transport chain which drives oxidative phosphorylation. The respiratory chain contains 3 multisubunit complexes succinate dehydrogenase (complex II, CII), ubiquinol-cytochrome c oxidoreductase (cytochrome b-c1 complex, complex III, CIII) and cytochrome c oxidase (complex IV, CIV), that cooperate to transfer electrons derived from NADH and succinate to molecular oxygen, creating an electrochemical gradient over the inner membrane that drives transmembrane transport and the ATP synthase. Cytochrome c oxidase is the component of the respiratory chain that catalyzes the reduction of oxygen to water. Electrons originating from reduced cytochrome c in the intermembrane space (IMS) are transferred via the dinuclear copper A center (CU(A)) of subunit 2 and heme A of subunit 1 to the active site in subunit 1, a binuclear center (BNC) formed by heme A3 and copper B (CU(B)). The BNC reduces molecular oxygen to 2 water molecules using 4 electrons from cytochrome c in the IMS and 4 protons from the mitochondrial matrix. The sequence is that of Cytochrome c oxidase subunit 2 (mt:CoII) from Drosophila yakuba (Fruit fly).